The sequence spans 166 residues: Large ribosomal subunit protein uL10 (166 aa).

The protein belongs to the universal ribosomal protein uL10 family. As to quaternary structure, part of the ribosomal stalk of the 50S ribosomal subunit. The N-terminus interacts with L11 and the large rRNA to form the base of the stalk. The C-terminus forms an elongated spine to which L12 dimers bind in a sequential fashion forming a multimeric L10(L12)X complex.

Its function is as follows. Forms part of the ribosomal stalk, playing a central role in the interaction of the ribosome with GTP-bound translation factors. This is Large ribosomal subunit protein uL10 (rplJ) from Neisseria meningitidis serogroup A / serotype 4A (strain DSM 15465 / Z2491).